The chain runs to 448 residues: Trigger factor (448 aa).

One can recognise a PPIase FKBP-type domain in the interval 172-257 (GDRVTVDFVG…MKKIEWPHLP (86 aa)).

Belongs to the FKBP-type PPIase family. Tig subfamily.

Its subcellular location is the cytoplasm. The enzyme catalyses [protein]-peptidylproline (omega=180) = [protein]-peptidylproline (omega=0). Involved in protein export. Acts as a chaperone by maintaining the newly synthesized protein in an open conformation. Functions as a peptidyl-prolyl cis-trans isomerase. This chain is Trigger factor, found in Paraburkholderia xenovorans (strain LB400).